Here is a 160-residue protein sequence, read N- to C-terminus: Phosphopantetheine adenylyltransferase (160 aa).

Serine 8 is a binding site for substrate. Residues 8–9 (SF) and histidine 16 each bind ATP. Substrate contacts are provided by lysine 40, leucine 74, and lysine 88. Residues 89–91 (GLR), glutamate 99, and 124–130 (YSFVSST) each bind ATP.

It belongs to the bacterial CoaD family. In terms of assembly, homohexamer. Mg(2+) serves as cofactor.

The protein resides in the cytoplasm. It carries out the reaction (R)-4'-phosphopantetheine + ATP + H(+) = 3'-dephospho-CoA + diphosphate. The protein operates within cofactor biosynthesis; coenzyme A biosynthesis; CoA from (R)-pantothenate: step 4/5. Reversibly transfers an adenylyl group from ATP to 4'-phosphopantetheine, yielding dephospho-CoA (dPCoA) and pyrophosphate. The sequence is that of Phosphopantetheine adenylyltransferase from Thermus thermophilus (strain ATCC BAA-163 / DSM 7039 / HB27).